A 545-amino-acid chain; its full sequence is T-box transcription factor TBX4 (545 aa).

Positions 71–251 form a DNA-binding region, T-box; that stretch reads LHEKELWKKF…NNPFAKGFRG (181 aa). The disordered stretch occupies residues 479–509; that stretch reads QSQVRERGPSASFPRERGLPQGCERKPPSPH. Residues 482 to 505 are compositionally biased toward basic and acidic residues; the sequence is VRERGPSASFPRERGLPQGCERKP. S507 carries the phosphoserine modification.

It is found in the nucleus. Transcriptional regulator that has an essential role in the organogenesis of lungs, pelvis, and hindlimbs. In Homo sapiens (Human), this protein is T-box transcription factor TBX4 (TBX4).